A 426-amino-acid polypeptide reads, in one-letter code: Putative 3-oxoacyl-[acyl-carrier-protein] synthase, mitochondrial (426 aa).

Residues 1 to 18 (MKRVVITGLGAVTPLGNG) constitute a mitochondrion transit peptide. Residues 19–423 (VKTNWRNLIQ…GTNASLCFKK (405 aa)) form the Ketosynthase family 3 (KS3) domain. Catalysis depends on for beta-ketoacyl synthase activity residues C170, H311, and H351.

Belongs to the thiolase-like superfamily. Beta-ketoacyl-ACP synthases family.

It localises to the mitochondrion. It carries out the reaction a fatty acyl-[ACP] + malonyl-[ACP] + H(+) = a 3-oxoacyl-[ACP] + holo-[ACP] + CO2. The catalysed reaction is butanoyl-[ACP] + malonyl-[ACP] + H(+) = 3-oxohexanoyl-[ACP] + holo-[ACP] + CO2. The enzyme catalyses hexanoyl-[ACP] + malonyl-[ACP] + H(+) = 3-oxooctanoyl-[ACP] + holo-[ACP] + CO2. It catalyses the reaction octanoyl-[ACP] + malonyl-[ACP] + H(+) = 3-oxodecanoyl-[ACP] + holo-[ACP] + CO2. It carries out the reaction decanoyl-[ACP] + malonyl-[ACP] + H(+) = 3-oxododecanoyl-[ACP] + holo-[ACP] + CO2. The catalysed reaction is dodecanoyl-[ACP] + malonyl-[ACP] + H(+) = 3-oxotetradecanoyl-[ACP] + holo-[ACP] + CO2. The enzyme catalyses tetradecanoyl-[ACP] + malonyl-[ACP] + H(+) = 3-oxohexadecanoyl-[ACP] + holo-[ACP] + CO2. It participates in lipid metabolism; fatty acid biosynthesis. Its function is as follows. May play a role in the biosynthesis of lipoic acid as well as longer chain fatty acids required for optimal mitochondrial function. The chain is Putative 3-oxoacyl-[acyl-carrier-protein] synthase, mitochondrial from Schizosaccharomyces pombe (strain 972 / ATCC 24843) (Fission yeast).